We begin with the raw amino-acid sequence, 950 residues long: F-box only protein 10 (950 aa).

One can recognise an F-box domain in the interval 1–48 (METGGLPLELWRMILAYLHLPDLGRCSLVCRAWYELILSLDSTRWRQL). PbH1 repeat units follow at residues 198 to 217 (SGHI…QVHG) and 238 to 260 (VPLC…TVEG). The segment at 313 to 364 (IEGSQSPTSPVCSSPKPGSKEAEVGSDGERVAQTPDSSDGGLSPSGEDEDDE) is disordered. The segment covering 315 to 324 (GSQSPTSPVC) has biased composition (polar residues). A phosphoserine mark is found at Ser-321 and Ser-326. Basic and acidic residues predominate over residues 330 to 342 (GSKEAEVGSDGER). A compositionally biased stretch (low complexity) spans 347 to 357 (PDSSDGGLSPS). PbH1 repeat units lie at residues 423–444 (VQGC…FVCS), 467–489 (NSKI…FLRL), 490–512 (EGGG…DIRK), 513–535 (KSNP…VVLG), 536–558 (NGKG…YILY), 559–581 (HGNP…AVNE), 582–604 (NGKG…DIRR), 605–627 (GGVP…VVGD), 628–650 (EGKG…WMMS), 651–673 (SSLP…AVFS), 713–735 (ITVA…FVQS), 736–758 (SEAL…TIVQ), 760–782 (SQLT…KVEF), 783–805 (QCKV…ITKG), and 828–850 (RSDT…AVRG).

Component of the SCF(FBXO10) complex consisting of CUL1, SKP1 and FBXO10. Interacts with BCL2. Interacts with PRDM1. As to expression, particularly highly expressed in B-cells.

The protein localises to the cytoplasm. It participates in protein modification; protein ubiquitination. Functionally, substrate-recognition component of the SCF (SKP1-CUL1-F-box protein)-type E3 ubiquitin ligase complex. Mediates the ubiquitination and degradation of BCL2, an antiapoptotic protein, thereby playing a role in apoptosis by controlling the stability of BCL2. Targets also the receptor for advanced glycation end products RAGE for ubiquitination and subsequent lysosomal degradation. Directly controls HGAL/GCSAM ubiquitination and degradation and thereby decreases BCR signaling. This Mus musculus (Mouse) protein is F-box only protein 10 (Fbxo10).